A 117-amino-acid chain; its full sequence is Glycine cleavage system H-like protein (117 aa).

One can recognise a Lipoyl-binding domain in the interval 21–103 (IVKLGLSSQM…ESEGWFVVLQ (83 aa)). Lys-62 bears the N6-lipoyllysine mark.

This sequence belongs to the GcvH family. Requires (R)-lipoate as cofactor.

The sequence is that of Glycine cleavage system H-like protein from Chlamydia trachomatis serovar L2 (strain ATCC VR-902B / DSM 19102 / 434/Bu).